The following is a 500-amino-acid chain: Probable E3 ubiquitin-protein ligase ARI16 (500 aa).

Residues 74-288 (NSNSSSADRE…QGNWNCSPVA (215 aa)) are TRIAD supradomain. Residues 78-130 (SSADRETGDGDYLVSTPFCSHKFSTTCWSEYLSDALKKNKEQRGLISCLSQDC) form an RING-type 1 zinc finger. Residues C96, H98, C125, C130, C169, C174, C194, C196, C201, C204, H209, C214, C241, C244, C261, C263, C268, C271, H278, and C284 each contribute to the Zn(2+) site. An IBR-type zinc finger spans residues 148 to 214 (EMYENYILES…GLESHRPVSC (67 aa)). An RING-type 2; atypical zinc finger spans residues 241–271 (CPKCKIPVQQNGDPNYRLINCICSNNFCWIC). Residues 453–483 (EPGSRWFCDRCTFENSWVDKQCKMCFFPLDY) form a RanBP2-type zinc finger.

The protein belongs to the RBR family. Ariadne subfamily. It depends on Zn(2+) as a cofactor. As to expression, preferentially expressed in green siliques.

It carries out the reaction [E2 ubiquitin-conjugating enzyme]-S-ubiquitinyl-L-cysteine + [acceptor protein]-L-lysine = [E2 ubiquitin-conjugating enzyme]-L-cysteine + [acceptor protein]-N(6)-ubiquitinyl-L-lysine.. The protein operates within protein modification; protein ubiquitination. Functionally, might act as an E3 ubiquitin-protein ligase, or as part of E3 complex, which accepts ubiquitin from specific E2 ubiquitin-conjugating enzymes and then transfers it to substrates. The protein is Probable E3 ubiquitin-protein ligase ARI16 (ARI16) of Arabidopsis thaliana (Mouse-ear cress).